The chain runs to 149 residues: Large-conductance mechanosensitive channel (149 aa).

Helical transmembrane passes span 14 to 34 (VVDM…VNTL) and 85 to 105 (GLFI…YLLV).

Belongs to the MscL family. In terms of assembly, homopentamer.

The protein localises to the cell inner membrane. Functionally, channel that opens in response to stretch forces in the membrane lipid bilayer. May participate in the regulation of osmotic pressure changes within the cell. This Chlorobium phaeovibrioides (strain DSM 265 / 1930) (Prosthecochloris vibrioformis (strain DSM 265)) protein is Large-conductance mechanosensitive channel.